A 565-amino-acid polypeptide reads, in one-letter code: Calcium-dependent protein kinase 21 (565 aa).

A lipid anchor (N-myristoyl glycine) is attached at Gly2. Residues 28-55 (PVPDAEAASPRKDGVDGDGDDVRGGGGG) form a disordered region. Basic and acidic residues predominate over residues 36–50 (SPRKDGVDGDGDDVR). Positions 77–358 (YVLGKELGRG…AKQVLEHPWL (282 aa)) constitute a Protein kinase domain. ATP is bound by residues 83 to 91 (LGRGEFGVT) and Lys106. Asp224 functions as the Proton acceptor in the catalytic mechanism. Positions 364–394 (APNVSLGDAVRARLQQFSAMNKFKKKALGVV) are autoinhibitory domain. EF-hand domains follow at residues 401-436 (EEVD…NGQP), 437-472 (VPEP…LKKM), 473-500 (SNDE…ELRE), and 504-539 (PNEQ…GADW). 19 residues coordinate Ca(2+): Asp414, Asp416, Asn418, His420, Glu425, Asp450, Asp452, Asn454, Thr456, Glu461, Asp486, Asp488, Ser490, Glu497, Asp517, Asp519, Asp521, Arg523, and Glu528.

This sequence belongs to the protein kinase superfamily. Ser/Thr protein kinase family. CDPK subfamily. In terms of tissue distribution, expressed in spikelets and developing seeds.

It localises to the membrane. It catalyses the reaction L-seryl-[protein] + ATP = O-phospho-L-seryl-[protein] + ADP + H(+). The enzyme catalyses L-threonyl-[protein] + ATP = O-phospho-L-threonyl-[protein] + ADP + H(+). Activated by calcium. Autophosphorylation may play an important role in the regulation of the kinase activity. May play a role in signal transduction pathways that involve calcium as a second messenger. Functions in signal transduction pathways that positively regulate responses to abscisic acid (ABA) and salt stress. This Oryza sativa subsp. japonica (Rice) protein is Calcium-dependent protein kinase 21.